The following is a 135-amino-acid chain: Small ribosomal subunit protein uS8 (135 aa).

The protein belongs to the universal ribosomal protein uS8 family. Part of the 30S ribosomal subunit. Contacts proteins S5 and S12.

Its function is as follows. One of the primary rRNA binding proteins, it binds directly to 16S rRNA central domain where it helps coordinate assembly of the platform of the 30S subunit. The sequence is that of Small ribosomal subunit protein uS8 from Nocardioides sp. (strain ATCC BAA-499 / JS614).